The chain runs to 214 residues: Sugar fermentation stimulation protein homolog (214 aa).

Belongs to the SfsA family.

This Aquifex aeolicus (strain VF5) protein is Sugar fermentation stimulation protein homolog.